We begin with the raw amino-acid sequence, 140 residues long: Sex-regulated protein janus-B (140 aa).

R42 contributes to the substrate binding site. Residue H69 is the Proton acceptor of the active site. 110–112 (SRT) contacts substrate.

Belongs to the janus family. As to expression, germline cells of adult males.

Its function is as follows. JanA and janB regulate somatic sex differentiation. This is Sex-regulated protein janus-B (janB) from Drosophila melanogaster (Fruit fly).